A 212-amino-acid polypeptide reads, in one-letter code: RNA chaperone ProQ (212 aa).

2 stretches are compositionally biased toward basic and acidic residues: residues 102–124 (ALKE…EKAK) and 132–144 (RKAD…DKPK). The interval 102–149 (ALKESKERVFASRRTNTKEEKAKQPRRPAPRKADAAAKSDKPKAAPKA) is disordered.

It belongs to the ProQ family.

It localises to the cytoplasm. In terms of biological role, RNA chaperone with significant RNA binding, RNA strand exchange and RNA duplexing activities. The protein is RNA chaperone ProQ of Aeromonas hydrophila subsp. hydrophila (strain ATCC 7966 / DSM 30187 / BCRC 13018 / CCUG 14551 / JCM 1027 / KCTC 2358 / NCIMB 9240 / NCTC 8049).